The primary structure comprises 968 residues: RNA polymerase-associated protein RapA (968 aa).

Residues 164–334 form the Helicase ATP-binding domain; it reads DVGRRHAPRV…FARLRLLDPN (171 aa). 177–184 serves as a coordination point for ATP; it reads DEVGLGKT. Positions 280–283 match the DEAH box motif; it reads DEAH. The Helicase C-terminal domain maps to 490-685; it reads RVEWLMGYLT…ALKAQLEQGR (196 aa).

The protein belongs to the SNF2/RAD54 helicase family. RapA subfamily. As to quaternary structure, interacts with the RNAP. Has a higher affinity for the core RNAP than for the holoenzyme. Its ATPase activity is stimulated by binding to RNAP.

In terms of biological role, transcription regulator that activates transcription by stimulating RNA polymerase (RNAP) recycling in case of stress conditions such as supercoiled DNA or high salt concentrations. Probably acts by releasing the RNAP, when it is trapped or immobilized on tightly supercoiled DNA. Does not activate transcription on linear DNA. Probably not involved in DNA repair. The sequence is that of RNA polymerase-associated protein RapA from Salmonella typhimurium (strain LT2 / SGSC1412 / ATCC 700720).